Here is a 642-residue protein sequence, read N- to C-terminus: Threonine--tRNA ligase (642 aa).

A TGS domain is found at 1–61 (MPVITLPDGS…EHDAQIAIIT (61 aa)). A catalytic region spans residues 243 to 534 (DHRKIGKQLD…LTEEYAGFYP (292 aa)). Zn(2+) contacts are provided by cysteine 334, histidine 385, and histidine 511.

It belongs to the class-II aminoacyl-tRNA synthetase family. In terms of assembly, homodimer. It depends on Zn(2+) as a cofactor.

The protein resides in the cytoplasm. The enzyme catalyses tRNA(Thr) + L-threonine + ATP = L-threonyl-tRNA(Thr) + AMP + diphosphate + H(+). Its function is as follows. Catalyzes the attachment of threonine to tRNA(Thr) in a two-step reaction: L-threonine is first activated by ATP to form Thr-AMP and then transferred to the acceptor end of tRNA(Thr). Also edits incorrectly charged L-seryl-tRNA(Thr). The polypeptide is Threonine--tRNA ligase (Sodalis glossinidius (strain morsitans)).